The primary structure comprises 94 residues: uncharacterized protein (94 aa).

Residues 1–23 (MVLLAGTRPQGGEARCMIPPPPS) are disordered.

This is an uncharacterized protein from Homo sapiens (Human).